The chain runs to 285 residues: 4-hydroxybenzoate octaprenyltransferase (285 aa).

9 helical membrane-spanning segments follow: residues 19 to 39 (IGSL…ADGL), 42 to 62 (WHVL…GCVI), 82 to 102 (LPSG…LVVC), 104 to 124 (FLLV…GIVL), 136 to 156 (YLPQ…AYAA), 166 to 186 (WLLF…YAMV), 210 to 230 (IIGL…SQLA), 233 to 253 (GIYY…QWLI), and 265 to 285 (FLNN…SVLI).

It belongs to the UbiA prenyltransferase family. Requires Mg(2+) as cofactor.

It localises to the cell inner membrane. The enzyme catalyses all-trans-octaprenyl diphosphate + 4-hydroxybenzoate = 4-hydroxy-3-(all-trans-octaprenyl)benzoate + diphosphate. It functions in the pathway cofactor biosynthesis; ubiquinone biosynthesis. Catalyzes the prenylation of para-hydroxybenzoate (PHB) with an all-trans polyprenyl group. Mediates the second step in the final reaction sequence of ubiquinone-8 (UQ-8) biosynthesis, which is the condensation of the polyisoprenoid side chain with PHB, generating the first membrane-bound Q intermediate 3-octaprenyl-4-hydroxybenzoate. The polypeptide is 4-hydroxybenzoate octaprenyltransferase (Aliivibrio fischeri (strain ATCC 700601 / ES114) (Vibrio fischeri)).